We begin with the raw amino-acid sequence, 208 residues long: Golgi apparatus membrane protein TVP23 homolog B (208 aa).

N-acetylmethionine is present on methionine 1. A compositionally biased stretch (acidic residues) spans 1-21; that stretch reads MLQQDSNDDTEDVSLFDAEEE. The segment at 1-27 is disordered; the sequence is MLQQDSNDDTEDVSLFDAEEETTNRPK. A run of 4 helical transmembrane segments spans residues 34-53, 54-72, 126-146, and 152-172; these read PVAS…VYLL, CELF…ILLL, IFWL…FSAL, and KWLA…YGYI.

The protein belongs to the TVP23 family.

The protein resides in the membrane. The polypeptide is Golgi apparatus membrane protein TVP23 homolog B (TVP23B) (Bos taurus (Bovine)).